Here is a 347-residue protein sequence, read N- to C-terminus: GMP reductase (347 aa).

108-131 (ADFEKTKQILDLNPALNFVCIDVA) provides a ligand contact to NADP(+). The K(+) site is built by G181 and G183. The active-site Thioimidate intermediate is the C186. 216 to 239 (IVSDGGCTTPGDVAKAFGGGADFV) is a binding site for NADP(+).

This sequence belongs to the IMPDH/GMPR family. GuaC type 1 subfamily. As to quaternary structure, homotetramer.

The enzyme catalyses IMP + NH4(+) + NADP(+) = GMP + NADPH + 2 H(+). Functionally, catalyzes the irreversible NADPH-dependent deamination of GMP to IMP. It functions in the conversion of nucleobase, nucleoside and nucleotide derivatives of G to A nucleotides, and in maintaining the intracellular balance of A and G nucleotides. This is GMP reductase from Escherichia coli O7:K1 (strain IAI39 / ExPEC).